The chain runs to 228 residues: Probable septum site-determining protein MinC (228 aa).

This sequence belongs to the MinC family. In terms of assembly, interacts with MinD and FtsZ.

In terms of biological role, cell division inhibitor that blocks the formation of polar Z ring septums. Rapidly oscillates between the poles of the cell to destabilize FtsZ filaments that have formed before they mature into polar Z rings. Prevents FtsZ polymerization. The polypeptide is Probable septum site-determining protein MinC (Pectobacterium carotovorum subsp. carotovorum (strain PC1)).